A 61-amino-acid polypeptide reads, in one-letter code: MAVPQSKTSRSRRDMRRAHDFLVTVNRSVCANCGAAKLPHHVCPECGFYKGREIVKKAVEA.

It belongs to the bacterial ribosomal protein bL32 family.

The chain is Large ribosomal subunit protein bL32 from Acidithiobacillus ferrooxidans (strain ATCC 23270 / DSM 14882 / CIP 104768 / NCIMB 8455) (Ferrobacillus ferrooxidans (strain ATCC 23270)).